The primary structure comprises 96 residues: ESAT-6-like protein EsxR (96 aa).

It belongs to the WXG100 family. ESAT-6 subfamily.

The protein localises to the secreted. This Mycobacterium leprae (strain TN) protein is ESAT-6-like protein EsxR.